Here is a 194-residue protein sequence, read N- to C-terminus: Orotate phosphoribosyltransferase (194 aa).

117 to 125 (EDIVSTGLS) is a 5-phospho-alpha-D-ribose 1-diphosphate binding site. Orotate contacts are provided by Ser121 and Arg149.

The protein belongs to the purine/pyrimidine phosphoribosyltransferase family. PyrE subfamily. In terms of assembly, homodimer. Mg(2+) is required as a cofactor.

It catalyses the reaction orotidine 5'-phosphate + diphosphate = orotate + 5-phospho-alpha-D-ribose 1-diphosphate. The protein operates within pyrimidine metabolism; UMP biosynthesis via de novo pathway; UMP from orotate: step 1/2. Catalyzes the transfer of a ribosyl phosphate group from 5-phosphoribose 1-diphosphate to orotate, leading to the formation of orotidine monophosphate (OMP). This is Orotate phosphoribosyltransferase from Maricaulis maris (strain MCS10) (Caulobacter maris).